The following is a 62-amino-acid chain: UPF0434 protein R03186 (62 aa).

This sequence belongs to the UPF0434 family.

The chain is UPF0434 protein R03186 from Rhizobium meliloti (strain 1021) (Ensifer meliloti).